Reading from the N-terminus, the 416-residue chain is Bifunctional protein GlmU (416 aa).

The segment at 1 to 229 (MTNYAIILAA…FNESLGVNDR (229 aa)) is pyrophosphorylase. UDP-N-acetyl-alpha-D-glucosamine is bound by residues 8-11 (LAAG), Lys-22, Gln-72, and 77-78 (GT). Asp-102 lines the Mg(2+) pocket. 4 residues coordinate UDP-N-acetyl-alpha-D-glucosamine: Gly-139, Glu-154, Asn-169, and Asn-227. Mg(2+) is bound at residue Asn-227. The linker stretch occupies residues 230-250 (VALATAETVMRQRITQKHMVN). An N-acetyltransferase region spans residues 251–416 (GVTFQNPETV…DSHCTFGSWR (166 aa)). The UDP-N-acetyl-alpha-D-glucosamine site is built by Arg-332 and Lys-350. The active-site Proton acceptor is the His-362. Positions 365 and 376 each coordinate UDP-N-acetyl-alpha-D-glucosamine. Residues Ala-379 and 385 to 386 (NY) each bind acetyl-CoA.

It in the N-terminal section; belongs to the N-acetylglucosamine-1-phosphate uridyltransferase family. The protein in the C-terminal section; belongs to the transferase hexapeptide repeat family. In terms of assembly, homotrimer. The cofactor is Mg(2+).

The protein localises to the cytoplasm. It carries out the reaction alpha-D-glucosamine 1-phosphate + acetyl-CoA = N-acetyl-alpha-D-glucosamine 1-phosphate + CoA + H(+). The catalysed reaction is N-acetyl-alpha-D-glucosamine 1-phosphate + UTP + H(+) = UDP-N-acetyl-alpha-D-glucosamine + diphosphate. The protein operates within nucleotide-sugar biosynthesis; UDP-N-acetyl-alpha-D-glucosamine biosynthesis; N-acetyl-alpha-D-glucosamine 1-phosphate from alpha-D-glucosamine 6-phosphate (route II): step 2/2. It functions in the pathway nucleotide-sugar biosynthesis; UDP-N-acetyl-alpha-D-glucosamine biosynthesis; UDP-N-acetyl-alpha-D-glucosamine from N-acetyl-alpha-D-glucosamine 1-phosphate: step 1/1. Its pathway is bacterial outer membrane biogenesis; LPS lipid A biosynthesis. Its function is as follows. Catalyzes the last two sequential reactions in the de novo biosynthetic pathway for UDP-N-acetylglucosamine (UDP-GlcNAc). The C-terminal domain catalyzes the transfer of acetyl group from acetyl coenzyme A to glucosamine-1-phosphate (GlcN-1-P) to produce N-acetylglucosamine-1-phosphate (GlcNAc-1-P), which is converted into UDP-GlcNAc by the transfer of uridine 5-monophosphate (from uridine 5-triphosphate), a reaction catalyzed by the N-terminal domain. This Streptococcus pyogenes serotype M12 (strain MGAS2096) protein is Bifunctional protein GlmU.